Consider the following 1150-residue polypeptide: ATP-dependent helicase/deoxyribonuclease subunit B (1150 aa).

An ATP-binding site is contributed by Gly8–Ser15. [4Fe-4S] cluster-binding residues include Cys789, Cys1109, Cys1112, and Cys1118.

Belongs to the helicase family. AddB/RexB type 1 subfamily. As to quaternary structure, heterodimer of AddA and AddB. Mg(2+) is required as a cofactor. [4Fe-4S] cluster serves as cofactor.

The heterodimer acts as both an ATP-dependent DNA helicase and an ATP-dependent, dual-direction single-stranded exonuclease. Recognizes the chi site generating a DNA molecule suitable for the initiation of homologous recombination. The AddB subunit has 5' -&gt; 3' nuclease activity but not helicase activity. This Clostridium kluyveri (strain NBRC 12016) protein is ATP-dependent helicase/deoxyribonuclease subunit B.